A 1402-amino-acid chain; its full sequence is MSNSMRDLIDGEAELDDEEDDESFDEEAGDRPRRRPNIDDSSEEEEDDEDEEEARKIREGFIVDEDEEDEAEDSDARERRRRKKRRREREEEEQLDEEDLDLIGEAIPEWERKPQPQRLKRGHRDDHRPTERRGLAEIFSDEDEEHDDRGYGRPSGRAQADEFDDFIEDDYPEDDEERRHREEDEEVARPKDRGLNIDTTGLDKDALEDMDAIFGNGEDYEWALQLEEEQEHAERTKEDIELQDVFEPSQLKEKLLTDEDNRIRFNDEPERFQLDRKAFKNLQMTSDQFKEEARWISNLMLPSKNLSSELHGPFNKAVGKVLEFFVIDGVEVPYVFQHRRDYLIHAKKMRNPNRRDDPDAPEYTVDAEKLLTQDDLWKVLDLDIRFRSFLEKRNALEQTYDKLKEKTRDDILEEMIRQAQSIEELQDLQDYLNFQYSAELKDLAANDNSAQREIKRAGGRTAQFERIRRSNAYKFVQALGITPDRLAKNILRESSKVTSEDDSRLPDDLADTLVDADFPTGELVINAARQMLAEEMFASPRMRKHFRKNFYGMGIVSCRRTDKGLRKIDEANPYYEVKYLKNMSIADLAVRPELFLKMMKAEEEGLIEIKVSLENDREFRQQLFSDFASENFSELADKWNAERQKVIDLAFDKLVKVIVKGVKDSLRTACQDELLKTCRELYFKRLDQAPYKPKGMVIGTTPRVLTLSNGMGDPNREPVSWVSMDEDGRILEHGTFTNLARDESQREALAELVRRRQPDVIGISGFSADTHRLIKDVEGLVSEKGLVGPEYDDPETNEYRSDLLEVIVINDEVARLYKDSPRAVADHPSLNPMTRYCIALARYMQNPMKEYAALGKDVTSLQIHPYQQYLPQAKLLKHLETAMVDMVNLVGVDINVAMQDANTAHLLPYVAGLGPRKAQLLIKGINKNGGVVTSRDELVGDPERHKLPVLGPRVWNNCASFLFIEYEPTNPESDPLDNTRIHPEDYDLARKVAADALGLDEEDVKAETDENGAGAIVRKLFKDDEQDKVNELILEEYAEQLEREYQQRKRATLETIRAELQVPYEELRKKFESLTVDQVFTMLTGENRDSLCEGMIVAANVRVVKDDFAIVKLDCGIEGRIESHDVSYRHSIKDVLHVGQVVQAKLIDLNRKEFVSKLSMRDEEMRRPFRRHFDHGRDQWDYRKEDEDREELREKDKSTGRAQRVVNHPLFKPFNSTQAEEYLGSQPSGEVVIRPSSKGNDHLAVTWKVADGVFQHVDVLELQKENEFAVGRVLRVGKYTYQDLDELIVDHVKAMAKKVDELMQCDKFQKGSRNETEKWLTTYMDANPNRSTYAFCIDTKHPGYFFLCFKASRNSRVNAWPVRVIPHAFELMKSQYPDVRALCNGFKLRYQSEMLKQQSGGR.

A disordered region spans residues 1–199 (MSNSMRDLID…PKDRGLNIDT (199 aa)). Composition is skewed to acidic residues over residues 10 to 28 (DGEA…DEEA), 40 to 52 (DSSE…EDEE), 62 to 75 (IVDE…EDSD), and 90 to 102 (EEEE…DLDL). A compositionally biased stretch (basic and acidic residues) spans 123 to 135 (HRDDHRPTERRGL). Residues 161–176 (DEFDDFIEDDYPEDDE) are compositionally biased toward acidic residues. A compositionally biased stretch (basic and acidic residues) spans 177-199 (ERRHREEDEEVARPKDRGLNIDT). The S1 motif domain occupies 1094 to 1161 (GMIVAANVRV…KEFVSKLSMR (68 aa)). The SH2 domain maps to 1209–1306 (PLFKPFNSTQ…KKVDELMQCD (98 aa)).

The protein belongs to the SPT6 family.

The protein localises to the nucleus. The protein resides in the chromosome. In terms of biological role, histone H3-H4 chaperone that plays a role in maintenance of chromatin structure during RNA polymerase II transcription elongation thereby repressing transcription initiation from cryptic promoters. Mediates the reassembly of nucleosomes onto the promoters of at least a selected set of genes during repression; the nucleosome reassembly is essential for transcriptional repression. Essential for viability. This is Transcription elongation factor spt-6 (spt-6) from Neurospora crassa (strain ATCC 24698 / 74-OR23-1A / CBS 708.71 / DSM 1257 / FGSC 987).